A 421-amino-acid polypeptide reads, in one-letter code: Tryptophan synthase beta chain (421 aa).

Lysine 110 carries the N6-(pyridoxal phosphate)lysine modification.

This sequence belongs to the TrpB family. Tetramer of two alpha and two beta chains. Pyridoxal 5'-phosphate serves as cofactor.

It catalyses the reaction (1S,2R)-1-C-(indol-3-yl)glycerol 3-phosphate + L-serine = D-glyceraldehyde 3-phosphate + L-tryptophan + H2O. Its pathway is amino-acid biosynthesis; L-tryptophan biosynthesis; L-tryptophan from chorismate: step 5/5. Its function is as follows. The beta subunit is responsible for the synthesis of L-tryptophan from indole and L-serine. This Mycobacterium intracellulare protein is Tryptophan synthase beta chain (trpB).